Here is a 289-residue protein sequence, read N- to C-terminus: Ribosomal protein L11 methyltransferase (289 aa).

Threonine 135, glycine 156, aspartate 179, and asparagine 225 together coordinate S-adenosyl-L-methionine.

This sequence belongs to the methyltransferase superfamily. PrmA family.

It localises to the cytoplasm. It catalyses the reaction L-lysyl-[protein] + 3 S-adenosyl-L-methionine = N(6),N(6),N(6)-trimethyl-L-lysyl-[protein] + 3 S-adenosyl-L-homocysteine + 3 H(+). In terms of biological role, methylates ribosomal protein L11. In Chlorobaculum tepidum (strain ATCC 49652 / DSM 12025 / NBRC 103806 / TLS) (Chlorobium tepidum), this protein is Ribosomal protein L11 methyltransferase.